Here is a 179-residue protein sequence, read N- to C-terminus: ATP synthase subunit delta (179 aa).

The protein belongs to the ATPase delta chain family. F-type ATPases have 2 components, F(1) - the catalytic core - and F(0) - the membrane proton channel. F(1) has five subunits: alpha(3), beta(3), gamma(1), delta(1), epsilon(1). F(0) has three main subunits: a(1), b(2) and c(10-14). The alpha and beta chains form an alternating ring which encloses part of the gamma chain. F(1) is attached to F(0) by a central stalk formed by the gamma and epsilon chains, while a peripheral stalk is formed by the delta and b chains.

Its subcellular location is the cell membrane. F(1)F(0) ATP synthase produces ATP from ADP in the presence of a proton or sodium gradient. F-type ATPases consist of two structural domains, F(1) containing the extramembraneous catalytic core and F(0) containing the membrane proton channel, linked together by a central stalk and a peripheral stalk. During catalysis, ATP synthesis in the catalytic domain of F(1) is coupled via a rotary mechanism of the central stalk subunits to proton translocation. In terms of biological role, this protein is part of the stalk that links CF(0) to CF(1). It either transmits conformational changes from CF(0) to CF(1) or is implicated in proton conduction. The chain is ATP synthase subunit delta from Clostridium botulinum (strain 657 / Type Ba4).